The sequence spans 271 residues: Low choriolytic enzyme (271 aa).

Residues 1 to 20 (MDLLAKASVLLLLLLSLSNA) form the signal peptide. A propeptide spans 21–71 (QTDNMEEAENGSSKEEIDESELEDVSSIIFRMNNNSMEELLEGDLVLPKTR) (activation peptide). N-linked (GlcNAc...) asparagine glycosylation is found at asparagine 30 and asparagine 54. A Peptidase M12A domain is found at 72 to 271 (NAMKCFGAPD…ILRVNKLYKC (200 aa)). Cystine bridges form between cysteine 76–cysteine 83, cysteine 123–cysteine 271, and cysteine 144–cysteine 164. Histidine 172 contributes to the Zn(2+) binding site. Glutamate 173 is a catalytic residue. Zn(2+) is bound by residues histidine 176 and histidine 182. Asparagine 211 carries an N-linked (GlcNAc...) asparagine glycan.

Zn(2+) serves as cofactor.

It localises to the zymogen granule. The catalysed reaction is Hydrolysis of the inner layer of fish egg envelope. Also hydrolysis of casein and small molecule substrates such as succinyl-Leu-Leu-Val-Tyr-|-7-(4-methyl)coumarylamide.. In terms of biological role, participates in the breakdown of the egg envelope, which is derived from the egg extracellular matrix, at the time of hatching. Thus allowing the newly hatched fish to swim free. LCE solubilizes the egg envelope only after it has been swollen by the action of HCE. The protein is Low choriolytic enzyme (lce) of Oryzias latipes (Japanese rice fish).